A 567-amino-acid polypeptide reads, in one-letter code: Low-affinity glucose transporter (567 aa).

Over residues 1–24 (MSNQMTDSTSAGSGTEHSVDTNTA) the composition is skewed to polar residues. The disordered stretch occupies residues 1–36 (MSNQMTDSTSAGSGTEHSVDTNTALKAGSPNDLKVS). Residues 18–62 (SVDTNTALKAGSPNDLKVSHEEDLNDLEKTAEETLQQKPAKEYIF) lie on the Cytoplasmic side of the membrane. Residues 63-83 (VSLCCVMVAFGGFVFGWDTGT) form a helical membrane-spanning segment. At 84–113 (ISGFVNQTDFLRRFGQEKADGSHYLSNVRT) the chain is on the extracellular side. N-linked (GlcNAc...) asparagine glycosylation is present at Asn-89. Residues 114 to 134 (GLIVSIFNIGCAVGGIVLSNI) traverse the membrane as a helical segment. Residues 135–141 (GDRWGRR) lie on the Cytoplasmic side of the membrane. Residues 142–162 (IGLITVIIIYVIGIIIQIASV) traverse the membrane as a helical segment. Residues 163-167 (DKWYQ) lie on the Extracellular side of the membrane. A helical membrane pass occupies residues 168–188 (YFIGRIISGLGVGGITVLSPM). At 189–199 (LISETAPKHLR) the chain is on the cytoplasmic side. The helical transmembrane segment at 200–220 (GTLVSCYQLMITFGIFLGYCT) threads the bilayer. The Extracellular portion of the chain corresponds to 221 to 234 (NYGTKNYSNSVQWR). Residues 235–255 (VPLGLCFAWAIFMVLGMMFVP) traverse the membrane as a helical segment. The Cytoplasmic segment spans residues 256–334 (ESARFLVETD…MGIMIQSLQQ (79 aa)). The chain crosses the membrane as a helical span at residues 335 to 354 (LTGDNYFFYYGTTIFQSVGM). The Extracellular segment spans residues 355–358 (DDSF). Residues 359–379 (ETSIVLGIVNFASTFFALYTV) traverse the membrane as a helical segment. Over 380-386 (DHFGRRN) the chain is Cytoplasmic. A helical membrane pass occupies residues 387–407 (CLLYGCVGMVACYVVYASVGV). Residues 408–429 (TRLWPDGPDHPDISSKGAGNCM) lie on the Extracellular side of the membrane. Residues 430-450 (IVFACFYIFCFATTWAPIAYV) traverse the membrane as a helical segment. The Cytoplasmic portion of the chain corresponds to 451 to 466 (VISESYPLRVKGKAMA). The helical transmembrane segment at 467–487 (IASASNWIWGFLIGFFTPFIT) threads the bilayer. The Extracellular portion of the chain corresponds to 488 to 493 (SAIHFY). A helical transmembrane segment spans residues 494–514 (YGYVFMGCMVFAFFYVYFFVP). At 515-567 (ETKGLTLEEVNEMYSEGVLPWKSSSWVPSSRRGAEYDVDALQHDDKPWYKAML) the chain is on the cytoplasmic side.

It belongs to the major facilitator superfamily. Sugar transporter (TC 2.A.1.1) family.

Its subcellular location is the membrane. Its function is as follows. Low-affinity glucose transporter. The chain is Low-affinity glucose transporter (RAG1) from Kluyveromyces lactis (strain ATCC 8585 / CBS 2359 / DSM 70799 / NBRC 1267 / NRRL Y-1140 / WM37) (Yeast).